The sequence spans 250 residues: Probable septum site-determining protein MinC (250 aa).

The segment at 110–143 is disordered; it reads SGARERPLEPEPEVVKKPEPAPAPPPPPEPEVRP. Residues 112-128 show a composition bias toward basic and acidic residues; it reads ARERPLEPEPEVVKKPE. Residues 129–138 are compositionally biased toward pro residues; that stretch reads PAPAPPPPPE.

It belongs to the MinC family. As to quaternary structure, interacts with MinD and FtsZ.

Its function is as follows. Cell division inhibitor that blocks the formation of polar Z ring septums. Rapidly oscillates between the poles of the cell to destabilize FtsZ filaments that have formed before they mature into polar Z rings. Prevents FtsZ polymerization. This Pseudomonas putida (strain ATCC 47054 / DSM 6125 / CFBP 8728 / NCIMB 11950 / KT2440) protein is Probable septum site-determining protein MinC.